The following is a 367-amino-acid chain: Cobalt-precorrin-5B C(1)-methyltransferase (367 aa).

The protein belongs to the CbiD family.

The enzyme catalyses Co-precorrin-5B + S-adenosyl-L-methionine = Co-precorrin-6A + S-adenosyl-L-homocysteine. It participates in cofactor biosynthesis; adenosylcobalamin biosynthesis; cob(II)yrinate a,c-diamide from sirohydrochlorin (anaerobic route): step 6/10. Catalyzes the methylation of C-1 in cobalt-precorrin-5B to form cobalt-precorrin-6A. In Priestia megaterium (Bacillus megaterium), this protein is Cobalt-precorrin-5B C(1)-methyltransferase.